Reading from the N-terminus, the 488-residue chain is Argininosuccinate lyase 2 (488 aa).

It belongs to the lyase 1 family. Argininosuccinate lyase subfamily.

The protein resides in the cytoplasm. It catalyses the reaction 2-(N(omega)-L-arginino)succinate = fumarate + L-arginine. Its pathway is amino-acid biosynthesis; L-arginine biosynthesis; L-arginine from L-ornithine and carbamoyl phosphate: step 3/3. This chain is Argininosuccinate lyase 2, found in Rhizobium meliloti (strain 1021) (Ensifer meliloti).